Reading from the N-terminus, the 294-residue chain is tRNA pseudouridine synthase B (294 aa).

Asp39 (nucleophile) is an active-site residue.

It belongs to the pseudouridine synthase TruB family. Type 1 subfamily.

The catalysed reaction is uridine(55) in tRNA = pseudouridine(55) in tRNA. Responsible for synthesis of pseudouridine from uracil-55 in the psi GC loop of transfer RNAs. This is tRNA pseudouridine synthase B from Streptococcus pyogenes serotype M6 (strain ATCC BAA-946 / MGAS10394).